Reading from the N-terminus, the 308-residue chain is 1D-myo-inositol 2-acetamido-2-deoxy-alpha-D-glucopyranoside deacetylase (308 aa).

Positions 13, 16, and 147 each coordinate Zn(2+).

Belongs to the MshB deacetylase family. It depends on Zn(2+) as a cofactor.

The catalysed reaction is 1D-myo-inositol 2-acetamido-2-deoxy-alpha-D-glucopyranoside + H2O = 1D-myo-inositol 2-amino-2-deoxy-alpha-D-glucopyranoside + acetate. In terms of biological role, catalyzes the deacetylation of 1D-myo-inositol 2-acetamido-2-deoxy-alpha-D-glucopyranoside (GlcNAc-Ins) in the mycothiol biosynthesis pathway. This chain is 1D-myo-inositol 2-acetamido-2-deoxy-alpha-D-glucopyranoside deacetylase, found in Mycobacterium leprae (strain Br4923).